A 986-amino-acid polypeptide reads, in one-letter code: Bifunctional glutamine synthetase adenylyltransferase/adenylyl-removing enzyme (986 aa).

The tract at residues 1-473 (MTSSAPGNAD…HYARLFEGDP (473 aa)) is adenylyl removase. Positions 478-986 (SLPPVNYGAG…RRVFTALLER (509 aa)) are adenylyl transferase.

This sequence belongs to the GlnE family. Requires Mg(2+) as cofactor.

The enzyme catalyses [glutamine synthetase]-O(4)-(5'-adenylyl)-L-tyrosine + phosphate = [glutamine synthetase]-L-tyrosine + ADP. It catalyses the reaction [glutamine synthetase]-L-tyrosine + ATP = [glutamine synthetase]-O(4)-(5'-adenylyl)-L-tyrosine + diphosphate. Involved in the regulation of glutamine synthetase GlnA, a key enzyme in the process to assimilate ammonia. When cellular nitrogen levels are high, the C-terminal adenylyl transferase (AT) inactivates GlnA by covalent transfer of an adenylyl group from ATP to specific tyrosine residue of GlnA, thus reducing its activity. Conversely, when nitrogen levels are low, the N-terminal adenylyl removase (AR) activates GlnA by removing the adenylyl group by phosphorolysis, increasing its activity. The regulatory region of GlnE binds the signal transduction protein PII (GlnB) which indicates the nitrogen status of the cell. The protein is Bifunctional glutamine synthetase adenylyltransferase/adenylyl-removing enzyme of Bradyrhizobium sp. (strain ORS 278).